Here is a 142-residue protein sequence, read N- to C-terminus: ATP synthase epsilon chain (142 aa).

Belongs to the ATPase epsilon chain family. F-type ATPases have 2 components, CF(1) - the catalytic core - and CF(0) - the membrane proton channel. CF(1) has five subunits: alpha(3), beta(3), gamma(1), delta(1), epsilon(1). CF(0) has three main subunits: a, b and c.

It localises to the cell membrane. In terms of biological role, produces ATP from ADP in the presence of a proton gradient across the membrane. In Lactiplantibacillus plantarum (strain ATCC BAA-793 / NCIMB 8826 / WCFS1) (Lactobacillus plantarum), this protein is ATP synthase epsilon chain.